Consider the following 284-residue polypeptide: RNase adapter protein RapZ (284 aa).

Position 8–15 (8–15 (GRSGSGKS)) interacts with ATP. 56–59 (DVRN) is a binding site for GTP. Positions 266–284 (RSRGKNVQSRHRTLEKRKT) are RNA-binding.

It belongs to the RapZ-like family. RapZ subfamily. Homotrimer.

In terms of biological role, modulates the synthesis of GlmS, by affecting the processing and stability of the regulatory small RNA GlmZ. When glucosamine-6-phosphate (GlcN6P) concentrations are high in the cell, RapZ binds GlmZ and targets it to cleavage by RNase E. Consequently, GlmZ is inactivated and unable to activate GlmS synthesis. Under low GlcN6P concentrations, RapZ is sequestered and inactivated by an other regulatory small RNA, GlmY, preventing GlmZ degradation and leading to synthesis of GlmS. This is RNase adapter protein RapZ from Citrobacter koseri (strain ATCC BAA-895 / CDC 4225-83 / SGSC4696).